Here is a 257-residue protein sequence, read N- to C-terminus: Pyridoxal phosphate homeostasis protein (257 aa).

Ser2 is modified (N-acetylserine). The residue at position 49 (Lys49) is an N6-(pyridoxal phosphate)lysine.

This sequence belongs to the pyridoxal phosphate-binding protein YggS/PROSC family.

It is found in the cytoplasm. The protein localises to the nucleus. Functionally, pyridoxal 5'-phosphate (PLP)-binding protein, which may be involved in intracellular homeostatic regulation of pyridoxal 5'-phosphate (PLP), the active form of vitamin B6. The chain is Pyridoxal phosphate homeostasis protein from Saccharomyces cerevisiae (strain ATCC 204508 / S288c) (Baker's yeast).